Reading from the N-terminus, the 289-residue chain is tRNA pseudouridine synthase A (289 aa).

Asp-67 functions as the Nucleophile in the catalytic mechanism. Tyr-125 lines the substrate pocket.

It belongs to the tRNA pseudouridine synthase TruA family. In terms of assembly, homodimer.

It carries out the reaction uridine(38/39/40) in tRNA = pseudouridine(38/39/40) in tRNA. Formation of pseudouridine at positions 38, 39 and 40 in the anticodon stem and loop of transfer RNAs. This Prochlorococcus marinus (strain MIT 9211) protein is tRNA pseudouridine synthase A.